A 590-amino-acid chain; its full sequence is AT-rich interactive domain-containing protein 5A (590 aa).

The tract at residues 1–52 is disordered; the sequence is MAAPPAKGNTEQSEEGDLPQLPVSPKPDDEQSRSQSPTQLQDSPEAGGEQEE. The tract at residues 1–294 is interaction with SOX9; sequence MAAPPAKGNT…NKDIQDSPQN (294 aa). Ser-24 bears the Phosphoserine mark. Positions 33-42 are enriched in polar residues; the sequence is RSQSPTQLQD. An ARID domain is found at 50–142; the sequence is QEEEQAFLVS…LVLPYVRHLK (93 aa). Residues Lys-80 and Lys-89 each participate in a glycyl lysine isopeptide (Lys-Gly) (interchain with G-Cter in ubiquitin) cross-link. A disordered region spans residues 141–229; the sequence is LKGEDDKPLP…SGPSPPLTGA (89 aa). Over residues 160 to 186 the composition is skewed to basic and acidic residues; it reads MAKELRGDDGTTEKLKKAKDSEERRVE. A compositionally biased stretch (polar residues) spans 187 to 210; that stretch reads QTTPGKTKSDATGQTQLPCQGSSR. A phosphoserine mark is found at Ser-253 and Ser-283. Disordered regions lie at residues 275 to 323, 367 to 402, and 419 to 443; these read EGCR…RMEA, GPPG…TRKR, and VPTE…RGLE. The segment covering 367 to 381 has biased composition (basic and acidic residues); the sequence is GPPGKEEGPTTKESH. Ser-433 and Ser-458 each carry phosphoserine.

Interacts with SOX9. Interacts with ESR1. Interacts with RORC. Post-translationally, phosphorylated by MAPK14 on serine residues involving a TLR4 signaling pathway upon lipopolysaccharide (LPS) stimulation leading to its ubiquitination and proteasomal degradation. Ubiquitinated leading to proteasomal degradation; involving WWP1 linked to MAPK14-mediated phosphorylation upon LPS stimulation. Expressed in T cells (at protein level). Expressed at high levels in cartilage, heart, testis and bone.

The protein resides in the nucleus. Its function is as follows. DNA-binding protein that may regulate transcription and act as a repressor by binding to AT-rich stretches in the promoter region of target genes. May positively regulate chondrocyte-specific transcription such as of COL2A1 in collaboration with SOX9 and positively regulate histone H3 acetylation at chondrocyte-specific genes. May stimulate early-stage chondrocyte differentiation and inhibit later stage differention. Can repress ESR1-mediated transcriptional activation; proposed to act as corepressor for selective nuclear hormone receptors. As an RNA-binding protein, involved in the regulation of inflammatory response by stabilizing selective inflammation-related mRNAs, such as STAT3 and TBX21. Also stabilizes IL6 mRNA. Binds to stem loop structures located in the 3'UTRs of IL6, STAT3 and TBX21 mRNAs; at least for STAT3 prevents binding of ZC3H12A to the mRNA stem loop structure thus inhibiting its degradation activity. Contributes to elevated IL6 levels possibly implicated in autoimmunity processes. IL6-dependent stabilization of STAT3 mRNA may promote differentiation of naive CD4+ T-cells into T-helper Th17 cells. In CD4+ T-cells may also inhibit RORC-induced Th17 cell differentiation independently of IL6 signaling. Stabilization of TBX21 mRNA contributes to elevated interferon-gamma secretion in Th1 cells possibly implicated in the establishment of septic shock. Stabilizes TNFRSF4/OX40 mRNA by binding to the conserved stem loop structure in its 3'UTR; thereby competing with the mRNA-destabilizing functions of RC3H1 and endoribonuclease ZC3H12A. This chain is AT-rich interactive domain-containing protein 5A (Arid5a), found in Mus musculus (Mouse).